Here is a 311-residue protein sequence, read N- to C-terminus: Malate dehydrogenase (311 aa).

NAD(+) is bound by residues 7 to 13 (GAAGGIG) and D34. The substrate site is built by R81 and R87. Residues N94 and 117–119 (ITN) each bind NAD(+). Residues N119 and R153 each contribute to the substrate site. The Proton acceptor role is filled by H177. An NAD(+)-binding site is contributed by M227.

This sequence belongs to the LDH/MDH superfamily. MDH type 1 family. Homodimer.

The enzyme catalyses (S)-malate + NAD(+) = oxaloacetate + NADH + H(+). Functionally, catalyzes the reversible oxidation of malate to oxaloacetate. The polypeptide is Malate dehydrogenase (Shewanella putrefaciens (strain CN-32 / ATCC BAA-453)).